The primary structure comprises 509 residues: ATP synthase subunit alpha (509 aa).

Residue 169-176 (GDRQTGKT) coordinates ATP.

Belongs to the ATPase alpha/beta chains family. In terms of assembly, F-type ATPases have 2 components, CF(1) - the catalytic core - and CF(0) - the membrane proton channel. CF(1) has five subunits: alpha(3), beta(3), gamma(1), delta(1), epsilon(1). CF(0) has three main subunits: a(1), b(2) and c(9-12). The alpha and beta chains form an alternating ring which encloses part of the gamma chain. CF(1) is attached to CF(0) by a central stalk formed by the gamma and epsilon chains, while a peripheral stalk is formed by the delta and b chains.

It localises to the cell inner membrane. It carries out the reaction ATP + H2O + 4 H(+)(in) = ADP + phosphate + 5 H(+)(out). Produces ATP from ADP in the presence of a proton gradient across the membrane. The alpha chain is a regulatory subunit. In Chelativorans sp. (strain BNC1), this protein is ATP synthase subunit alpha.